The sequence spans 336 residues: Aromatic prenyltransferase (336 aa).

The protein belongs to the aromatic prenyltransferase family.

Functionally, prenyltransferase that attaches isoprenoid moieties to carbon atoms of aromatic substrates in an enzyme-catalyzed Friedel-Crafts reaction. Shows specificity for dimethylallyl diphosphate (DMAPP) and does not accept geranyl diphosphate (GPP) or isopentenyl diphosphate (IPP). Prenylates the artificial substrate 2,7-dihydroxynaphthalene (2,7-DHN), as well as dihydrophenazine-1-carboxylic acid at a lower level. Only traces of products are detected with aspulvinone E, flaviolin, or 4-hydroxybenzoic acid as substrates; and no product is formed with L-tryptophan, L-tyrosine, or 4-hydroxyphenylpyruvate. Ptf seems no to be involved in the prenylation reaction in the biosynthesis of aspulvinone H and J and the physiological function of ptf remains unknown. The sequence is that of Aromatic prenyltransferase from Aspergillus terreus (strain NIH 2624 / FGSC A1156).